A 1399-amino-acid chain; its full sequence is MKDLLNLLKNQGQVEEFDAIRIGLASPEMIRSWSFGEVKKPETINYRTFKPERDGLFCAKIFGPVKDYECLCGKYKRLKHRGVICEKCGVEVALAKVRRERMAHIELASPVAHIWFLKSLPSRIGLLMDMTLRDIERVLYFESYVVIDPGMTTLEKGQLLNDEQYFEALEEFGDDFDARMGAEAVRELLHAIDLEHEIGRLREEIPQTNSETKIKKLSKRLKLMEAFQGSGNLPEWMVLTVLPVLPPDLRPLVPLDGGRFATSDLNDLYRRVINRNNRLKRLLDLSAPDIIVRNEKRMLQEAVDALLDNGRRGRAITGSNKRPLKSLADMIKGKQGRFRQNLLGKRVDYSGRSVITVGPTLRLHQCGLPKKMALELFKPFIFGKLEMRGLATTIKAAKKMVERELPEVWDVLAEVIREHPVLLNRAPTLHRLGIQAFEPVLIEGKAIQLHPLVCAAYNADFDGDQMAVHVPLTLEAQLEARALMMSTNNILSPANGEPIIVPSQDVVLGLYYMTREAINAKGEGRVFADLQEVDRVFRAGEAALHAKVKVRINETVNDRDGGSVTNTRIVDTTVGRALLYQVVPKGLSYDVVNLPMKKKAISKLINQCYRVVGLKETVIFADQLMYTGFAYSTISGVSIGVNDFVIPDEKAQIIGAATDEVKEIESQYASGLVTQGEKYNKVIDLWSKANDEVSKAMMANLSKEKVIDRHGVEVDQESFNSMYMMADSGARGSAAQIRQLAGMRGLMAKPDGSIIETPITANFREGLSVLQYFISTHGARKGLADTALKTANSGYLTRRLVDVAQDLVVTEVDCGTEHGLLMTPHIEGGDVVEPLGERVLGRVIARDVFKPGTEEIIVPAGTLVDEKWVEFIELNSIDEVIVRSPISCETRYGICAKCYGRDLARGHQVNIGEAVGVIAAQSIGEPGTQLTMRTFHIGGAASRTSAADSVQVKNGGTVRLHNLKHVERVDGHLVAVSRSGELAIADDYGRERERYKLPYGAVISVKEGDKVDAGAIVAKWDPHTHPIVTEMKGTVTYVGMEEGITIKRQTDELTGMTNIEVLDAKDRPAAGKDIRPAVKMVDDNGKDLLLPGTDVIAQYFLPANALVGVADGAKIAIGDVIARIPQETSKTRDITGGLPRVADLFEARRPKEASILAEVSGTIAFGKETKGKRRLVITPNDGSDPYEELIPKWRHLNVFEGEQVNRGEVISDGPSDPHDILRLLGVSALAKYIVNEIQDVYRLQGVKINDKHIETILRQMLRKVEIAESGDSSFIKGDQMELTHVLVENERLGAEDKFVSKFTRVLLGITKASLSTESFISAASFQETTRVLTEAAVTGKRDYLRGLKENVVVGRLIPAGTGLAYHSERKRRRDADKPLRVSASEVEAALTEALNSSGN.

4 residues coordinate Zn(2+): C70, C72, C85, and C88. Mg(2+) is bound by residues D460, D462, and D464. Zn(2+) contacts are provided by C814, C888, C895, and C898.

This sequence belongs to the RNA polymerase beta' chain family. As to quaternary structure, the RNAP catalytic core consists of 2 alpha, 1 beta, 1 beta' and 1 omega subunit. When a sigma factor is associated with the core the holoenzyme is formed, which can initiate transcription. Requires Mg(2+) as cofactor. Zn(2+) serves as cofactor.

It carries out the reaction RNA(n) + a ribonucleoside 5'-triphosphate = RNA(n+1) + diphosphate. In terms of biological role, DNA-dependent RNA polymerase catalyzes the transcription of DNA into RNA using the four ribonucleoside triphosphates as substrates. This is DNA-directed RNA polymerase subunit beta' from Pseudomonas fluorescens (strain SBW25).